We begin with the raw amino-acid sequence, 226 residues long: PKHD-type hydroxylase Sfri_0612 (226 aa).

A Fe2OG dioxygenase domain is found at 77–177; it reads KIFPPCFNRY…RIAAITWMQS (101 aa). Fe cation-binding residues include His-95, Asp-97, and His-158. Arg-168 serves as a coordination point for 2-oxoglutarate.

It depends on Fe(2+) as a cofactor. L-ascorbate is required as a cofactor.

The polypeptide is PKHD-type hydroxylase Sfri_0612 (Shewanella frigidimarina (strain NCIMB 400)).